Here is a 1073-residue protein sequence, read N- to C-terminus: MLSFLTEVTGAIAQTSARRPIQFMVVPALLASIAYLSIIDDYIPEHIKSSSGSSGISYYHPYTSSHYKSQPDLDKWTAIDKEHINDDIYTQANQISVIPLRFRRFQDVVPNVPNAIHISDNEQILIVPTDQIENSLDQLQEITNNGITWKARNNDKLAKYYDYIRYGLNKVQDAIQHAENFDILLIFVAYLGMWYALIKVFVDMRKIGSKFWLAFSTLTSSTFAFLLALLVSNKFLHTKVSLLSLSEGIPFLVSVIGFKHKVSIATIVANSSTASPEDVPHVVGKAVSSHCLSMLRDHLVVIGGLLSCAIYAHHLTGLRNFCILSSLILSFDLILVYTFFSAILGLKVEINRARRTEDLQNALEEEGISSLVAARVAEQSATIEHPNEHNFFKSNNSSIAYFKVIMSLGFFAFHAFWLGSSWLYSTTDGGESFSRFSFLSNIPTLSQDISQQIPIGRKGTVVTILPTIFFMPSGFMVQLEDFIYLVLSKFSSAIRDSIISKFLVFGFALSIVTNVYFLNAARYQVSATHKLIEKEISRPQDSSVTATTTTTATGTTSSGAATSKTIGNNKGLKSVQEIPDNEDESSDEELEIKAPVKVLPLEECVKVLKEGKVKTLSNDEVSSLVVGGKLPLYALEKQLADNKRAVIVRRKAIAKLANAPVLDTNRLPYAHYDYDRVFGACCENVIGYMPLPVGVAGPLIIDEKPYHIPMATTEGCLVASTMRGCKAINAGGGVETVLTRDGMTRGPCVRFPTLKRAGAAKLWIDSEQGQATIKKAFNSTSRFARLQHIQTALAGTSLFIRFRTTTGDAMGMNMISKGVEYSLKYMVEECGWDDMEIVSVSGNYCTDKKPAAINWIEGRGKSIVAAARIPADVVTKVLKSDVDALVELNISKNLVGSAMAGSVGGFNAHAANLVTAVYLACGQDPAQNVESSNCITLMEKDKETGDLNVSVSMPSIEVGTIGGGTILEPQGAMLDLLGVRGPHPTNPGANAQQLAKIVASAVLAAELSLCSALAAGHLVQSHMQHNRSKAPAAGATTTTTPAITDSKASNGSIASNGKDLKRLEEGSVTCIKS.

8 helical membrane-spanning segments follow: residues 23-43, 181-201, 211-231, 298-318, 326-346, 399-419, 459-479, and 498-518; these read FMVV…DDYI, FDIL…IKVF, FWLA…ALLV, HLVV…LTGL, SLIL…ILGL, IAYF…FWLG, GTVV…MVQL, and IISK…VYFL. Residues 182–346 enclose the SSD domain; sequence DILLIFVAYL…YTFFSAILGL (165 aa). Low complexity predominate over residues 542–565; the sequence is SSVTATTTTTATGTTSSGAATSKT. Residues 542–589 form a disordered region; it reads SSVTATTTTTATGTTSSGAATSKTIGNNKGLKSVQEIPDNEDESSDEE. The span at 579 to 589 shows a compositional bias: acidic residues; sequence PDNEDESSDEE. The active-site Charge relay system is the glutamate 714. CoA is bound at residue 720-726; it reads STMRGCK. Residues 781 to 783 and 808 to 816 each bind NADP(+); these read SRF and DAMGMNMIS. Lysine 848 functions as the Charge relay system in the catalytic mechanism. 877–879 contributes to the CoA binding site; the sequence is VLK. The active-site Charge relay system is the aspartate 924. A helical transmembrane segment spans residues 997-1017; that stretch reads IVASAVLAAELSLCSALAAGH. 1021–1022 lines the CoA pocket; the sequence is SH. Histidine 1022 acts as the Proton donor in catalysis. The tract at residues 1025–1056 is disordered; it reads HNRSKAPAAGATTTTTPAITDSKASNGSIASN. 1026–1027 provides a ligand contact to NADP(+); sequence NR. Residues 1030 to 1042 are compositionally biased toward low complexity; that stretch reads APAAGATTTTTPA. The segment covering 1046-1055 has biased composition (polar residues); sequence SKASNGSIAS.

The protein belongs to the HMG-CoA reductase family.

The protein localises to the endoplasmic reticulum membrane. The catalysed reaction is (R)-mevalonate + 2 NADP(+) + CoA = (3S)-3-hydroxy-3-methylglutaryl-CoA + 2 NADPH + 2 H(+). The protein operates within metabolic intermediate biosynthesis; (R)-mevalonate biosynthesis; (R)-mevalonate from acetyl-CoA: step 3/3. HMG-CoA reductase; part of the first module of ergosterol biosynthesis pathway that includes the early steps of the pathway, conserved across all eukaryotes, and which results in the formation of mevalonate from acetyl-coenzyme A (acetyl-CoA). HMG1 catalyzes the reduction of hydroxymethylglutaryl-CoA (HMG-CoA) to mevalonate. The first module starts with the action of the cytosolic acetyl-CoA acetyltransferase ERG10 that catalyzes the formation of acetoacetyl-CoA. The hydroxymethylglutaryl-CoA synthase ERG13 then condenses acetyl-CoA with acetoacetyl-CoA to form HMG-CoA. The 3-hydroxy-3-methylglutaryl-coenzyme A (HMG-CoA) reductase HMG1 finally reduces HMG-CoA to produce mevalonate. In Candida albicans (strain SC5314 / ATCC MYA-2876) (Yeast), this protein is 3-hydroxy-3-methylglutaryl-coenzyme A reductase 1.